The following is a 595-amino-acid chain: UvrABC system protein C (595 aa).

The 78-residue stretch at 17–94 (IEPGCYLMKD…IKQYQPRYNI (78 aa)) folds into the GIY-YIG domain. Positions 199 to 234 (KTILHNLEQKMQESSESLDFERAKEYRDLIQHIHNL) constitute a UVR domain.

The protein belongs to the UvrC family. As to quaternary structure, interacts with UvrB in an incision complex.

It is found in the cytoplasm. Functionally, the UvrABC repair system catalyzes the recognition and processing of DNA lesions. UvrC both incises the 5' and 3' sides of the lesion. The N-terminal half is responsible for the 3' incision and the C-terminal half is responsible for the 5' incision. In Staphylococcus saprophyticus subsp. saprophyticus (strain ATCC 15305 / DSM 20229 / NCIMB 8711 / NCTC 7292 / S-41), this protein is UvrABC system protein C.